We begin with the raw amino-acid sequence, 251 residues long: Imidazole glycerol phosphate synthase subunit HisF (251 aa).

Residues Asp-12 and Asp-131 contribute to the active site.

It belongs to the HisA/HisF family. Heterodimer of HisH and HisF.

It localises to the cytoplasm. It catalyses the reaction 5-[(5-phospho-1-deoxy-D-ribulos-1-ylimino)methylamino]-1-(5-phospho-beta-D-ribosyl)imidazole-4-carboxamide + L-glutamine = D-erythro-1-(imidazol-4-yl)glycerol 3-phosphate + 5-amino-1-(5-phospho-beta-D-ribosyl)imidazole-4-carboxamide + L-glutamate + H(+). It functions in the pathway amino-acid biosynthesis; L-histidine biosynthesis; L-histidine from 5-phospho-alpha-D-ribose 1-diphosphate: step 5/9. In terms of biological role, IGPS catalyzes the conversion of PRFAR and glutamine to IGP, AICAR and glutamate. The HisF subunit catalyzes the cyclization activity that produces IGP and AICAR from PRFAR using the ammonia provided by the HisH subunit. This Streptomyces avermitilis (strain ATCC 31267 / DSM 46492 / JCM 5070 / NBRC 14893 / NCIMB 12804 / NRRL 8165 / MA-4680) protein is Imidazole glycerol phosphate synthase subunit HisF.